The primary structure comprises 276 residues: Large ribosomal subunit protein uL2 (276 aa).

Residues 219–276 (TVRGSVMNPNDHPHGGGEGRAPIGRKSPMSPWGKPTLGYKTRQRNKPSDKYIVRKRKK) are disordered.

The protein belongs to the universal ribosomal protein uL2 family. As to quaternary structure, part of the 50S ribosomal subunit. Forms a bridge to the 30S subunit in the 70S ribosome.

One of the primary rRNA binding proteins. Required for association of the 30S and 50S subunits to form the 70S ribosome, for tRNA binding and peptide bond formation. It has been suggested to have peptidyltransferase activity; this is somewhat controversial. Makes several contacts with the 16S rRNA in the 70S ribosome. This chain is Large ribosomal subunit protein uL2, found in Oceanobacillus iheyensis (strain DSM 14371 / CIP 107618 / JCM 11309 / KCTC 3954 / HTE831).